Consider the following 316-residue polypeptide: Beta-ketoacyl-[acyl-carrier-protein] synthase III (316 aa).

Catalysis depends on residues Cys-112 and His-243. Positions 244-248 (QANIR) are ACP-binding. Asn-273 is an active-site residue.

Belongs to the thiolase-like superfamily. FabH family. In terms of assembly, homodimer.

The protein localises to the cytoplasm. The enzyme catalyses malonyl-[ACP] + acetyl-CoA + H(+) = 3-oxobutanoyl-[ACP] + CO2 + CoA. The protein operates within lipid metabolism; fatty acid biosynthesis. In terms of biological role, catalyzes the condensation reaction of fatty acid synthesis by the addition to an acyl acceptor of two carbons from malonyl-ACP. Catalyzes the first condensation reaction which initiates fatty acid synthesis and may therefore play a role in governing the total rate of fatty acid production. Possesses both acetoacetyl-ACP synthase and acetyl transacylase activities. Its substrate specificity determines the biosynthesis of branched-chain and/or straight-chain of fatty acids. The sequence is that of Beta-ketoacyl-[acyl-carrier-protein] synthase III from Haemophilus ducreyi (strain 35000HP / ATCC 700724).